Consider the following 585-residue polypeptide: GRR1-like protein 1 (585 aa).

The F-box domain occupies methionine 1–asparagine 48. A 1D-myo-inositol hexakisphosphate-binding site is contributed by lysine 70. The interaction with auxin-responsive proteins stretch occupies residues aspartate 77 to tyrosine 78. 1D-myo-inositol hexakisphosphate-binding positions include lysine 109–arginine 110 and arginine 340. The interaction with auxin-responsive proteins stretch occupies residues proline 343–leucine 348. A 1D-myo-inositol hexakisphosphate-binding site is contributed by cysteine 397–arginine 399. An interaction with auxin-responsive proteins region spans residues cysteine 401 to proline 405. Arginine 432 is a 1D-myo-inositol hexakisphosphate binding site. The segment at alanine 460–phenylalanine 461 is interaction with auxin-responsive proteins. 1D-myo-inositol hexakisphosphate-binding positions include lysine 480 to lysine 481 and arginine 505.

In terms of assembly, part of a SCF (SKP1-cullin-F-box) protein ligase complex. Interacts with CUL1, SKP1A/ASK1 and SKP1B/ASK2. Interacts with Aux/IAA proteins (IAA7 and IAA12) in an auxin-dependent manner. As to expression, ubiquitous.

It localises to the nucleus. It functions in the pathway protein modification; protein ubiquitination. Functionally, component of SCF(ASK-cullin-F-box) E3 ubiquitin ligase complexes, which may mediate the ubiquitination and subsequent proteasomal degradation of target proteins. Auxin receptor that mediates Aux/IAA proteins proteasomal degradation and auxin-regulated transcription. Involved in embryogenesis regulation by auxin. Confers sensitivity to the virulent bacterial pathogen P.syringae. Mediates glucose repression in yeast. This Arabidopsis thaliana (Mouse-ear cress) protein is GRR1-like protein 1 (GRH1).